A 58-amino-acid chain; its full sequence is Putative transcript Y 13 protein (58 aa).

The helical transmembrane segment at 17-37 threads the bilayer; sequence LLGWDLNLSLFLGLCLMLLLA.

The protein localises to the membrane. This chain is Putative transcript Y 13 protein (TTTY13), found in Homo sapiens (Human).